Consider the following 424-residue polypeptide: Serine--tRNA ligase (424 aa).

231–233 is an L-serine binding site; that stretch reads TAE. An ATP-binding site is contributed by 262–264; the sequence is RSE. L-serine is bound at residue Glu-285. Residue 349 to 352 coordinates ATP; the sequence is EISS. Ser-385 serves as a coordination point for L-serine.

This sequence belongs to the class-II aminoacyl-tRNA synthetase family. Type-1 seryl-tRNA synthetase subfamily. As to quaternary structure, homodimer. The tRNA molecule binds across the dimer.

It localises to the cytoplasm. The enzyme catalyses tRNA(Ser) + L-serine + ATP = L-seryl-tRNA(Ser) + AMP + diphosphate + H(+). The catalysed reaction is tRNA(Sec) + L-serine + ATP = L-seryl-tRNA(Sec) + AMP + diphosphate + H(+). It participates in aminoacyl-tRNA biosynthesis; selenocysteinyl-tRNA(Sec) biosynthesis; L-seryl-tRNA(Sec) from L-serine and tRNA(Sec): step 1/1. Functionally, catalyzes the attachment of serine to tRNA(Ser). Is also able to aminoacylate tRNA(Sec) with serine, to form the misacylated tRNA L-seryl-tRNA(Sec), which will be further converted into selenocysteinyl-tRNA(Sec). This Bacillus pumilus (strain SAFR-032) protein is Serine--tRNA ligase.